The following is a 416-amino-acid chain: UDP-N-acetylglucosamine 1-carboxyvinyltransferase (416 aa).

Lys22–Asn23 contacts phosphoenolpyruvate. Arg91 is a UDP-N-acetyl-alpha-D-glucosamine binding site. Catalysis depends on Cys115, which acts as the Proton donor. At Cys115 the chain carries 2-(S-cysteinyl)pyruvic acid O-phosphothioketal. 2 residues coordinate UDP-N-acetyl-alpha-D-glucosamine: Asp304 and Ile326.

Belongs to the EPSP synthase family. MurA subfamily.

The protein resides in the cytoplasm. It catalyses the reaction phosphoenolpyruvate + UDP-N-acetyl-alpha-D-glucosamine = UDP-N-acetyl-3-O-(1-carboxyvinyl)-alpha-D-glucosamine + phosphate. Its pathway is cell wall biogenesis; peptidoglycan biosynthesis. Functionally, cell wall formation. Adds enolpyruvyl to UDP-N-acetylglucosamine. This chain is UDP-N-acetylglucosamine 1-carboxyvinyltransferase, found in Thermodesulfovibrio yellowstonii (strain ATCC 51303 / DSM 11347 / YP87).